A 244-amino-acid polypeptide reads, in one-letter code: Cell division protein ZipA (244 aa).

Residues 1 to 4 lie on the Periplasmic side of the membrane; the sequence is MSDM. A helical membrane pass occupies residues 5–25; it reads AMIRIGILIAGLLLVAAIFLF. Residues 26–244 are Cytoplasmic-facing; the sequence is GRPKKSPQGR…APPLTKSPRW (219 aa). Positions 30–91 are disordered; it reads KSPQGRRVDK…GAGGNDVGKR (62 aa). A compositionally biased stretch (basic and acidic residues) spans 35–50; the sequence is RRVDKDDTQPRERREP.

Belongs to the ZipA family. As to quaternary structure, interacts with FtsZ via their C-terminal domains.

It localises to the cell inner membrane. In terms of biological role, essential cell division protein that stabilizes the FtsZ protofilaments by cross-linking them and that serves as a cytoplasmic membrane anchor for the Z ring. Also required for the recruitment to the septal ring of downstream cell division proteins. The chain is Cell division protein ZipA from Xanthomonas campestris pv. campestris (strain ATCC 33913 / DSM 3586 / NCPPB 528 / LMG 568 / P 25).